We begin with the raw amino-acid sequence, 294 residues long: rRNA 2'-O-methyltransferase fibrillarin (294 aa).

A disordered region spans residues 1–62 (MGKDFKSGGG…GKFGAKGPRG (62 aa)). Residues 20 to 56 (GPGGPGGRPFNKGPGGPGGPGGKFGGGRPGGPGGKFG) are compositionally biased toward gly residues. Asymmetric dimethylarginine occurs at positions 27, 47, and 61. S-adenosyl-L-methionine is bound by residues 151-152 (TT), 170-171 (EF), 195-196 (DA), and 215-218 (DVAQ).

It belongs to the methyltransferase superfamily. Fibrillarin family. Component of box C/D small nucleolar ribonucleoprotein (snoRNP) particles. It is associated with the U3, U8 and U13 small nuclear RNAs. By homology to other fibrillarins, some or all of the N-terminal domain arginines are modified to asymmetric dimethylarginine (DMA).

Its subcellular location is the nucleus. It localises to the nucleolus. It catalyses the reaction L-glutaminyl-[histone H2A] + S-adenosyl-L-methionine = N(5)-methyl-L-glutaminyl-[histone H2A] + S-adenosyl-L-homocysteine + H(+). Its function is as follows. S-adenosyl-L-methionine-dependent methyltransferase that has the ability to methylate both RNAs and proteins. Involved in pre-rRNA processing. Utilizes the methyl donor S-adenosyl-L-methionine to catalyze the site-specific 2'-hydroxyl methylation of ribose moieties in pre-ribosomal RNA. Site specificity is provided by a guide RNA that base pairs with the substrate. Methylation occurs at a characteristic distance from the sequence involved in base pairing with the guide RNA. Also acts as a protein methyltransferase by mediating methylation of 'Gln-105' of histone H2A (H2AQ105me), a modification that impairs binding of the FACT complex and is specifically present at 35S ribosomal DNA locus. The polypeptide is rRNA 2'-O-methyltransferase fibrillarin (FIB) (Tetrahymena thermophila).